A 641-amino-acid chain; its full sequence is Threonine--tRNA ligase (641 aa).

Residues 1–61 (MPIITLPDGT…TQNSHIQIIT (61 aa)) enclose the TGS domain. The catalytic stretch occupies residues 242-533 (DHRKLGKKYS…LIENYSGNFP (292 aa)). Residues Cys333, His384, and His510 each contribute to the Zn(2+) site.

The protein belongs to the class-II aminoacyl-tRNA synthetase family. Homodimer. Zn(2+) is required as a cofactor.

It localises to the cytoplasm. It catalyses the reaction tRNA(Thr) + L-threonine + ATP = L-threonyl-tRNA(Thr) + AMP + diphosphate + H(+). Its function is as follows. Catalyzes the attachment of threonine to tRNA(Thr) in a two-step reaction: L-threonine is first activated by ATP to form Thr-AMP and then transferred to the acceptor end of tRNA(Thr). Also edits incorrectly charged L-seryl-tRNA(Thr). The chain is Threonine--tRNA ligase from Prochlorococcus marinus (strain NATL2A).